The sequence spans 215 residues: AN1-type zinc finger protein C1271.05c (215 aa).

A compositionally biased stretch (polar residues) spans 116–128 (IPSISKSNLTNPP). Residues 116-138 (IPSISKSNLTNPPLESEKSSDKA) form a disordered region. The segment at 144 to 193 (ATSRRRCCHPTCTRITLRLAGNCLHCNGRFCAAHRLMEDHDCVALFSLRK) adopts an AN1-type zinc-finger fold. Zn(2+)-binding residues include Cys-150, Cys-155, Cys-166, Cys-169, Cys-174, His-177, His-183, and Cys-185.

The protein resides in the cytoplasm. It localises to the nucleus. The polypeptide is AN1-type zinc finger protein C1271.05c (Schizosaccharomyces pombe (strain 972 / ATCC 24843) (Fission yeast)).